Consider the following 564-residue polypeptide: Bicarbonate transporter BicA (564 aa).

Topologically, residues 1 to 11 (MQITNKIHFRN) are cytoplasmic. A helical transmembrane segment spans residues 12 to 37 (LQGDLFGGVTAAVIALPMALAFGIAS). At 38–40 (GAG) the chain is on the periplasmic side. Residues 41–58 (ATAGLWGAVIVGFFAALF) traverse the membrane as a helical segment. Topologically, residues 59-70 (GGTPTLISEPTG) are cytoplasmic. Residue Thr69 coordinates hydrogencarbonate. Residues 71 to 86 (PMTVVQTAVIASLVAA) form a helical membrane-spanning segment. Topologically, residues 87–90 (DPDN) are periplasmic. The helical transmembrane segment at 91-112 (GLAMAFTVVMMAGLFQIAFGLL) threads the bilayer. Residues 113–122 (KLGKYVTMMP) lie on the Cytoplasmic side of the membrane. Residues 123–145 (YTVISGFMSGIGIILVILQLAPF) form a helical membrane-spanning segment. Residues 146–170 (LGQASPKGGVIGTLQALPNLVSNVR) lie on the Periplasmic side of the membrane. A helical membrane pass occupies residues 171 to 185 (PVETLLALMTVGIIW). Residues 186–196 (FMPSRWKKFAP) lie on the Cytoplasmic side of the membrane. The chain crosses the membrane as a helical span at residues 197 to 211 (PQLVALVLGTIISIT). Residues 212 to 240 (LFGDLDIRRIGEIQAGLPALQLPVFQADQ) are Periplasmic-facing. A helical membrane pass occupies residues 241–269 (LQRMLIDAAVLGMLGCIDALLTSVVADSL). Residues Asp258 and Thr262 each coordinate Na(+). Residues 270–275 (TRTEHN) lie on the Cytoplasmic side of the membrane. The helical transmembrane segment at 276–292 (SNKELVGQGIGNVMSGL) threads the bilayer. Topologically, residues 293-302 (FGGLGGAGAT) are periplasmic. Gly300 provides a ligand contact to Na(+). Position 301 (Ala301) interacts with hydrogencarbonate. Thr302 is a binding site for Na(+). A helical transmembrane segment spans residues 303-312 (MGTVVNIQSG). At 313-315 (GRT) the chain is on the cytoplasmic side. The helical transmembrane segment at 316–338 (ALSGLIRAMVLLVVILGAAKLAA) threads the bilayer. The Periplasmic segment spans residues 339 to 341 (TIP). The helical transmembrane segment at 342–357 (LAVLAGIAFKVGVDII) threads the bilayer. The Cytoplasmic portion of the chain corresponds to 358–369 (DWGFLKRAHHVS). Residues 370–390 (IKGALIMYAVIVLTVLVDLIA) form a helical membrane-spanning segment. At 391–392 (AV) the chain is on the periplasmic side. A helical membrane pass occupies residues 393–405 (GIGVFIANILTID). The Cytoplasmic segment spans residues 406–564 (RMSALQSKAV…PSSSSVQTTY (159 aa)). In terms of domain architecture, STAS spans 432 to 542 (KRWLDEGNGR…DDRSEALKDA (111 aa)).

This sequence belongs to the SLC26A/SulP transporter (TC 2.A.53) family. As to quaternary structure, forms homodimers through the STAS cytoplasmic domain.

It localises to the cell inner membrane. In terms of biological role, low affinity, high-flux Na(+)-dependent bicarbonate transporter. Involved in carbone dioxide-concentrating mechanisms (CCMs) that accumulate CO(2) and improve photosynthetic carbon fixation. The protein is Bicarbonate transporter BicA of Synechocystis sp. (strain ATCC 27184 / PCC 6803 / Kazusa).